The chain runs to 311 residues: MDGDNQSENSQFLLLGISESPEQQQILFWMFLSMYLVTVLGNVLIILAISSDSHLHTPMYFFLANLSFTDLFFVTNTIPKMLVNFQSQNKAISYAGCLTQLYFLVSLVTLDNLILAVMAYDRYVAICCPLHYVTAMSPGLCVLLLSLCWGLSVLYGLLLTFLLTRVTFCGPREIHYLFCDMYILLWLACSNTHIIHTALIATGCFIFLTLLGFMTTSYVRIVRTILQMPSASKKYKTFSTCASHLGVVSLFYGTLAMVYLQPLHTYSMKDSVATVMYAVLTPMMNPFIYSLRNKDMHGAPGRVLWRPFQRP.

The Extracellular segment spans residues 1-25 (MDGDNQSENSQFLLLGISESPEQQQ). N-linked (GlcNAc...) asparagine glycosylation is present at Asn5. The chain crosses the membrane as a helical span at residues 26-49 (ILFWMFLSMYLVTVLGNVLIILAI). Residues 50–57 (SSDSHLHT) lie on the Cytoplasmic side of the membrane. Residues 58 to 79 (PMYFFLANLSFTDLFFVTNTIP) traverse the membrane as a helical segment. At 80–100 (KMLVNFQSQNKAISYAGCLTQ) the chain is on the extracellular side. A disulfide bond links Cys97 and Cys189. Residues 101 to 120 (LYFLVSLVTLDNLILAVMAY) traverse the membrane as a helical segment. Residues 121–140 (DRYVAICCPLHYVTAMSPGL) are Cytoplasmic-facing. Residues 141–158 (CVLLLSLCWGLSVLYGLL) traverse the membrane as a helical segment. Topologically, residues 159–196 (LTFLLTRVTFCGPREIHYLFCDMYILLWLACSNTHIIH) are extracellular. The helical transmembrane segment at 197-220 (TALIATGCFIFLTLLGFMTTSYVR) threads the bilayer. Residues 221–237 (IVRTILQMPSASKKYKT) lie on the Cytoplasmic side of the membrane. The helical transmembrane segment at 238 to 260 (FSTCASHLGVVSLFYGTLAMVYL) threads the bilayer. Residues 261–271 (QPLHTYSMKDS) lie on the Extracellular side of the membrane. The helical transmembrane segment at 272-291 (VATVMYAVLTPMMNPFIYSL) threads the bilayer. The Cytoplasmic portion of the chain corresponds to 292-311 (RNKDMHGAPGRVLWRPFQRP).

Belongs to the G-protein coupled receptor 1 family.

The protein localises to the cell membrane. Functionally, odorant receptor. This Homo sapiens (Human) protein is Olfactory receptor 1D4 (OR1D4).